Here is a 298-residue protein sequence, read N- to C-terminus: Acetylglutamate kinase (298 aa).

Substrate-binding positions include 69–70 (GG), Arg-91, and Asn-191.

It belongs to the acetylglutamate kinase family. ArgB subfamily.

It is found in the cytoplasm. It carries out the reaction N-acetyl-L-glutamate + ATP = N-acetyl-L-glutamyl 5-phosphate + ADP. The protein operates within amino-acid biosynthesis; L-arginine biosynthesis; N(2)-acetyl-L-ornithine from L-glutamate: step 2/4. Functionally, catalyzes the ATP-dependent phosphorylation of N-acetyl-L-glutamate. This is Acetylglutamate kinase from Neisseria meningitidis serogroup A / serotype 4A (strain DSM 15465 / Z2491).